The chain runs to 138 residues: Nucleoside diphosphate kinase (138 aa).

Residues Lys-9, Phe-57, Arg-85, Thr-91, Arg-102, and Asn-112 each contribute to the ATP site. The active-site Pros-phosphohistidine intermediate is His-115.

It belongs to the NDK family. In terms of assembly, homotetramer. Mg(2+) serves as cofactor.

The protein resides in the cytoplasm. It carries out the reaction a 2'-deoxyribonucleoside 5'-diphosphate + ATP = a 2'-deoxyribonucleoside 5'-triphosphate + ADP. The enzyme catalyses a ribonucleoside 5'-diphosphate + ATP = a ribonucleoside 5'-triphosphate + ADP. Its function is as follows. Major role in the synthesis of nucleoside triphosphates other than ATP. The ATP gamma phosphate is transferred to the NDP beta phosphate via a ping-pong mechanism, using a phosphorylated active-site intermediate. The sequence is that of Nucleoside diphosphate kinase from Deinococcus deserti (strain DSM 17065 / CIP 109153 / LMG 22923 / VCD115).